The primary structure comprises 603 residues: UvrABC system protein C (603 aa).

The GIY-YIG domain occupies 17–94 (TTSGCYKMLN…IKTHKPDYNV (78 aa)). The UVR domain occupies 199–234 (SEILSQIDIKLKLAVQKEDFETAIKLKEMKSSLIEI).

Belongs to the UvrC family. In terms of assembly, interacts with UvrB in an incision complex.

It localises to the cytoplasm. In terms of biological role, the UvrABC repair system catalyzes the recognition and processing of DNA lesions. UvrC both incises the 5' and 3' sides of the lesion. The N-terminal half is responsible for the 3' incision and the C-terminal half is responsible for the 5' incision. This is UvrABC system protein C from Borrelia garinii subsp. bavariensis (strain ATCC BAA-2496 / DSM 23469 / PBi) (Borreliella bavariensis).